The sequence spans 284 residues: 2-dehydro-3-deoxyphosphooctonate aldolase (284 aa).

This sequence belongs to the KdsA family.

The protein localises to the cytoplasm. It carries out the reaction D-arabinose 5-phosphate + phosphoenolpyruvate + H2O = 3-deoxy-alpha-D-manno-2-octulosonate-8-phosphate + phosphate. The protein operates within carbohydrate biosynthesis; 3-deoxy-D-manno-octulosonate biosynthesis; 3-deoxy-D-manno-octulosonate from D-ribulose 5-phosphate: step 2/3. Its pathway is bacterial outer membrane biogenesis; lipopolysaccharide biosynthesis. In Enterobacter sp. (strain 638), this protein is 2-dehydro-3-deoxyphosphooctonate aldolase.